The following is a 431-amino-acid chain: Chaperone SurA (431 aa).

A signal peptide spans 1–22 (MKLWKPTLISVLSALTLFNAHA). 2 PpiC domains span residues 173 to 271 (TVQY…KIDD) and 280 to 380 (VTEV…EVLD).

The protein resides in the periplasm. The enzyme catalyses [protein]-peptidylproline (omega=180) = [protein]-peptidylproline (omega=0). Chaperone involved in the correct folding and assembly of outer membrane proteins. Recognizes specific patterns of aromatic residues and the orientation of their side chains, which are found more frequently in integral outer membrane proteins. May act in both early periplasmic and late outer membrane-associated steps of protein maturation. The protein is Chaperone SurA of Vibrio cholerae serotype O1 (strain ATCC 39315 / El Tor Inaba N16961).